A 198-amino-acid chain; its full sequence is Recombination protein RecR (198 aa).

The segment at 58–73 (CSVCGNYTDTDPCAIC) adopts a C4-type zinc-finger fold. A Toprim domain is found at 81–175 (SLVCVVEEPK…KVTRIAHGIP (95 aa)).

The protein belongs to the RecR family.

In terms of biological role, may play a role in DNA repair. It seems to be involved in an RecBC-independent recombinational process of DNA repair. It may act with RecF and RecO. In Clostridium acetobutylicum (strain ATCC 824 / DSM 792 / JCM 1419 / IAM 19013 / LMG 5710 / NBRC 13948 / NRRL B-527 / VKM B-1787 / 2291 / W), this protein is Recombination protein RecR.